A 1912-amino-acid chain; its full sequence is Vitellogenin-1 (1912 aa).

An N-terminal signal peptide occupies residues 1-15 (MRGLISALVLTLVGS). In terms of domain architecture, Vitellogenin spans 24-663 (FGENKVYTYN…AGSLIPTMAV (640 aa)). A glycan (N-linked (GlcNAc...) asparagine) is linked at N163. Residues 948–972 (DSASGETDNIRDRQSVEDVSSGNSF) form a disordered region. N-linked (GlcNAc...) asparagine glycosylation occurs at N991. 2 disordered regions span residues 1080–1329 (KILD…SYDI) and 1351–1432 (HWHS…RERN). Composition is skewed to low complexity over residues 1092 to 1124 (NSRS…NRAS) and 1150 to 1235 (SSSS…SSSK). An N-linked (GlcNAc...) asparagine glycan is attached at N1206. The span at 1259 to 1269 (EGERSVHEQKQ) shows a compositional bias: basic and acidic residues. The span at 1273-1299 (SSSSSSSRASSNSRSTSSSTSSSSESS) shows a compositional bias: low complexity. Basic and acidic residues predominate over residues 1306-1316 (WKQDREAETKR). The span at 1319 to 1328 (SQFNSHSSYD) shows a compositional bias: polar residues. Residues 1357–1381 (RTSSSSSSSSSESGSSHSNSSSSDS) are compositionally biased toward low complexity. N-linked (GlcNAc...) asparagine glycosylation is present at N1375. Residues 1397 to 1409 (SHRHGEKAAHSSR) show a composition bias toward basic residues. One can recognise a VWFD domain in the interval 1640 to 1818 (STCEVSKGDF…SWVLLEETCS (179 aa)). Disulfide bonds link C1642–C1781 and C1665–C1817. 3 N-linked (GlcNAc...) asparagine glycosylation sites follow: N1662, N1698, and N1703.

In terms of processing, phosvitin, an egg yolk storage protein, is one of the most highly phosphorylated (10%) proteins in nature. Post-translationally, cathepsin D is responsible for intraoocytic processing of vitellogenin. May contain intrachain disulfide bonds. Produced by the liver, secreted into the blood and then sequestered by receptor mediated endocytosis into growing oocytes, where it is generally cleaved, giving rise to the respective yolk components.

In terms of biological role, precursor of the egg-yolk proteins that are sources of nutrients during early development of oviparous organisms. Its function is as follows. Phosvitin is believed to be of importance in sequestering calcium, iron and other cations for the developing embryo. The chain is Vitellogenin-1 (VTG1) from Gallus gallus (Chicken).